Consider the following 415-residue polypeptide: Gamma-glutamyl phosphate reductase (415 aa).

The protein belongs to the gamma-glutamyl phosphate reductase family.

Its subcellular location is the cytoplasm. The enzyme catalyses L-glutamate 5-semialdehyde + phosphate + NADP(+) = L-glutamyl 5-phosphate + NADPH + H(+). Its pathway is amino-acid biosynthesis; L-proline biosynthesis; L-glutamate 5-semialdehyde from L-glutamate: step 2/2. In terms of biological role, catalyzes the NADPH-dependent reduction of L-glutamate 5-phosphate into L-glutamate 5-semialdehyde and phosphate. The product spontaneously undergoes cyclization to form 1-pyrroline-5-carboxylate. The sequence is that of Gamma-glutamyl phosphate reductase from Bacillus cereus (strain AH187).